Consider the following 145-residue polypeptide: D-aminoacyl-tRNA deacylase (145 aa).

Positions glycine 137 to proline 138 match the Gly-cisPro motif, important for rejection of L-amino acids motif.

It belongs to the DTD family. Homodimer.

It localises to the cytoplasm. It carries out the reaction glycyl-tRNA(Ala) + H2O = tRNA(Ala) + glycine + H(+). The catalysed reaction is a D-aminoacyl-tRNA + H2O = a tRNA + a D-alpha-amino acid + H(+). An aminoacyl-tRNA editing enzyme that deacylates mischarged D-aminoacyl-tRNAs. Also deacylates mischarged glycyl-tRNA(Ala), protecting cells against glycine mischarging by AlaRS. Acts via tRNA-based rather than protein-based catalysis; rejects L-amino acids rather than detecting D-amino acids in the active site. By recycling D-aminoacyl-tRNA to D-amino acids and free tRNA molecules, this enzyme counteracts the toxicity associated with the formation of D-aminoacyl-tRNA entities in vivo and helps enforce protein L-homochirality. This Legionella pneumophila (strain Paris) protein is D-aminoacyl-tRNA deacylase.